Consider the following 358-residue polypeptide: Endo-1,4-beta-xylanase B (358 aa).

A signal peptide spans 1–17 (MRFSASLLLALTGSAAA). In terms of domain architecture, GH10 spans 40 to 352 (QGLDAAMKAA…KAAYNAFLRG (313 aa)). The N-linked (GlcNAc...) asparagine glycan is linked to Asn136. Glu166 acts as the Proton donor in catalysis. The active-site Nucleophile is the Glu274.

This sequence belongs to the glycosyl hydrolase 10 (cellulase F) family.

The protein resides in the secreted. It carries out the reaction Endohydrolysis of (1-&gt;4)-beta-D-xylosidic linkages in xylans.. Its pathway is glycan degradation; xylan degradation. With respect to regulation, partial inhibition of activity is detected in the presence of Ag(+), Cu2(+) and SDS. Like most fungal xylanases, activity is completely inhibited by Hg(2+) since Hg(2+) could interact with tryptophan residues and oxidize the indole ring. Beta-mercaptoethanol enhances the enzymatic activity by counteracting the oxidation effects of the S-S linkage between cysteine residues. Endo-1,4-beta-xylanase involved in the hydrolysis of xylan, a major structural heterogeneous polysaccharide found in plant biomass representing the second most abundant polysaccharide in the biosphere, after cellulose. Is more active on soluble wheat arabinoxylan (defined as 100%) than on birchwood xylan (75.4%) and beechwood xylan (70.8%), and less active on insoluble wheat arabinoxylan (17.4%). Xylose is the major hydrolysis product of XynB. The protein is Endo-1,4-beta-xylanase B of Humicola insolens (Soft-rot fungus).